Here is a 1227-residue protein sequence, read N- to C-terminus: Pesticidal crystal protein Cry1Be (1227 aa).

This sequence belongs to the delta endotoxin family.

In terms of biological role, promotes colloidosmotic lysis by binding to the midgut epithelial cells of many lepidopteran larvae. The chain is Pesticidal crystal protein Cry1Be (cry1Be) from Bacillus thuringiensis.